The chain runs to 563 residues: Cytochrome P450 monooxygenase phqL (563 aa).

3 helical membrane-spanning segments follow: residues 20-40 (ENFS…IIIF), 52-72 (IPVG…FVPG), and 80-100 (ALWL…VSIL). Asn279 carries an N-linked (GlcNAc...) asparagine glycan. Residues 362–382 (LVIFAGSGTVAVTIIGCLYFL) form a helical membrane-spanning segment. Asn419 carries an N-linked (GlcNAc...) asparagine glycan. Cys502 provides a ligand contact to heme.

Belongs to the cytochrome P450 family. Heme is required as a cofactor.

It is found in the membrane. It participates in alkaloid biosynthesis. Functionally, cytochrome P450 monooxygenase; part of the gene cluster that mediates the biosynthesis of paraherquamide, a fungal indole alkaloid that belongs to a family of natural products containing a characteristic bicyclo[2.2.2]diazaoctane core. The first steps in the biosynthesis of paraherquamide is the production of the beta-methyl-proline precursor from L-isoleucine. They require oxidation of a terminally hydroxylated L-isoleucine to the corresponding aldehyde by enzymes which have still to be identified. Spontaneous cyclization and dehydration would yield the 4-methyl pyrolline-5-carboxylic acid, which is then reduced by the pyrroline-5-carboxylate reductase phqD leading to the beta-methyl-proline precursor. The next step of paraherquamide biosynthesis involves coupling of beta-methyl-proline and L-tryptophan by the bimodular NRPS phqB, to produce a monooxopiperazine intermediate. The reductase (R) domain of phqB utilizes NADPH for hydride transfer to reduce the thioester bond of the T domain-tethered linear dipeptide to a hemithioaminal intermediate, which spontaneously cleaves the C-S bond to release the aldehyde product. This compound undergoes spontaneous cyclization and dehydration to give a dienamine which is reverse prenylated at C-2 by the reverse prenyltransferase phqJ. The other prenyltransferase present in the cluster, phqI may be a redundant gene in the pathway. During biosynthetic assembly, the key step to produce the polycyclic core is catalyzed by the bifunctional reductase and intramolecular [4+2] Diels-Alderase, phqE, resulting in formation of the [2.2.2] diazaoctane intermediate preparaherquamide. Following formation of preparaherquamide, an indole 2,3-epoxidation-initiated pinacol-like rearrangement is catalyzed by the phqK FAD-dependent monooxygenase. The prenyltransferase phqA, the cytochrome P450 monooxygenase phqL, and the FAD-linked oxidoreductase phqH (or the cytochrome P450 monooxygenase phqM), are proposed to be involved in the formation of the pyran ring. The FAD-dependent monooxygenase phqK is likely responsible for generation of the spiro-oxindole, and the N-methylation is likely mediated by the phqN methyltransferase leading to the isolable natural product paraherquamide F. However, the order of these biosynthetic steps has still to be determined. In late-stage paraherquamide biosynthesis, the third P450 monooxygenase, phqO, is probably responsible for the C-14 hydroxylation, transforming paraherquamide F to paraherquamide G, and paraherquamide E to the final product paraherquamide A. The expansion from the 6-membered ring pyran (in paraherquamides F and G) to the 7-membered dioxepin ring (in paraherquamides A and E) represents a poorly understood but intriguing process that probably involves the 2-oxoglutarate-dependent dioxygenase phqC. Finally, the remaining members of the paraherquamide cluster, including phqI as well as phqM (or phqH), do not have a clearly prescribed role and appear to be redundant. The protein is Cytochrome P450 monooxygenase phqL of Penicillium fellutanum.